The primary structure comprises 229 residues: Putative N-acetylmannosamine-6-phosphate 2-epimerase (229 aa).

The protein belongs to the NanE family.

It carries out the reaction an N-acyl-D-glucosamine 6-phosphate = an N-acyl-D-mannosamine 6-phosphate. Its pathway is amino-sugar metabolism; N-acetylneuraminate degradation; D-fructose 6-phosphate from N-acetylneuraminate: step 3/5. Its function is as follows. Converts N-acetylmannosamine-6-phosphate (ManNAc-6-P) to N-acetylglucosamine-6-phosphate (GlcNAc-6-P). The polypeptide is Putative N-acetylmannosamine-6-phosphate 2-epimerase (Pediococcus pentosaceus (strain ATCC 25745 / CCUG 21536 / LMG 10740 / 183-1w)).